Here is a 1388-residue protein sequence, read N- to C-terminus: Rho-associated protein kinase 2 (1388 aa).

The segment at 1–26 is disordered; sequence MSRPPPTGKMPGAPEAAPGDGAGAGR. One can recognise a Protein kinase domain in the interval 92-354; it reads YDVVKVIGRG…VEEIKQHPFF (263 aa). Residues 98–106 and Lys121 contribute to the ATP site; that span reads IGRGAFGEV. The Proton acceptor role is filled by Asp214. The AGC-kinase C-terminal domain maps to 357–425; sequence DQWNWDNIRE…FRENLLLSDS (69 aa). The interval 363-784 is interaction with PPP1R12A; the sequence is NIRETAAPVV…LNELLKQKDV (422 aa). The interval 373-420 is interaction with NPM1; the sequence is PELSSDIDSSNFDDIEDDKGDVETFPIPKAFVGNQLPFIGFTYFRENL. Thr414 bears the Phosphothreonine; by ROCK2 mark. Residues 439–1131 are a coiled coil; that stretch reads SEESQEIQKK…QLQALHIGMD (693 aa). The REM-1 domain maps to 497–573; it reads TLRQLEREKA…LDEANALLRT (77 aa). Basic and acidic residues predominate over residues 512–530; it reads NAEYQRKADHEADKKRNLE. A disordered region spans residues 512–532; it reads NAEYQRKADHEADKKRNLEND. Tyr722 carries the post-translational modification Phosphotyrosine; by SRC. One can recognise a RhoBD domain in the interval 979-1047; sequence TSDVANLANE…LAEIMNRKEP (69 aa). The tract at residues 979 to 1047 is RHOA binding; that stretch reads TSDVANLANE…LAEIMNRKEP (69 aa). Ser1137 carries the phosphoserine modification. The region spanning 1150–1349 is the PH domain; sequence ESRLEGWLSL…WVSRLVKKIP (200 aa). The residue at position 1212 (Thr1212) is a Phosphothreonine. A Phorbol-ester/DAG-type zinc finger spans residues 1260–1315; that stretch reads GHEFIPTLYHFPTNCEACMKPLWHMFKPPPALECRRCHIKCHKDHMDKKEEIIAPC. The tract at residues 1345-1388 is disordered; that stretch reads VKKIPKKPPAPDPFARSSPRTSMKIQQNQSIRRPSRQLAPNKPS. Phosphoserine is present on residues Ser1362 and Ser1374. A compositionally biased stretch (polar residues) spans 1362-1376; it reads SPRTSMKIQQNQSIR.

This sequence belongs to the protein kinase superfamily. AGC Ser/Thr protein kinase family. Homodimer. Interacts with IRS1. Interacts with RAF1. Interacts with RHOA (activated by GTP), RHOB and RHOC. Interacts with PPP1R12A. Interacts with EP300. Interacts with CHORDC1. Interacts with BRCA2. Interacts with NPM1; this interaction enhances ROCK2 activity. Interacts with SORL1. Interacts with PJVK. Mg(2+) is required as a cofactor. Post-translationally, autophosphorylated. Phosphorylation at Tyr-722 reduces its binding to RHOA and is crucial for focal adhesion dynamics. Dephosphorylation by PTPN11 stimulates its RHOA binding activity. In terms of processing, cleaved by granzyme B during apoptosis. This leads to constitutive activation of the kinase and membrane blebbing. As to expression, highly expressed in brain, heart, lung, liver, stomach, spleen, kidney, testis, muscle, embryo and placenta. Isoform 2 is expressed predominantly in the skeletal muscle.

It is found in the cytoplasm. The protein localises to the cell membrane. Its subcellular location is the nucleus. The protein resides in the cytoskeleton. It localises to the microtubule organizing center. It is found in the centrosome. The catalysed reaction is L-seryl-[protein] + ATP = O-phospho-L-seryl-[protein] + ADP + H(+). It catalyses the reaction L-threonyl-[protein] + ATP = O-phospho-L-threonyl-[protein] + ADP + H(+). Activated by RHOA binding. Inhibited by Y-27632. Its function is as follows. Protein kinase which is a key regulator of actin cytoskeleton and cell polarity. Involved in regulation of smooth muscle contraction, actin cytoskeleton organization, stress fiber and focal adhesion formation, neurite retraction, cell adhesion and motility via phosphorylation of ADD1, BRCA2, CNN1, EZR, DPYSL2, EP300, MSN, MYL9/MLC2, NPM1, RDX, PPP1R12A and VIM. Phosphorylates SORL1 and IRF4. Acts as a negative regulator of VEGF-induced angiogenic endothelial cell activation. Positively regulates the activation of p42/MAPK1-p44/MAPK3 and of p90RSK/RPS6KA1 during myogenic differentiation. Plays an important role in the timely initiation of centrosome duplication. Inhibits keratinocyte terminal differentiation. May regulate closure of the eyelids and ventral body wall through organization of actomyosin bundles. Plays a critical role in the regulation of spine and synaptic properties in the hippocampus. Plays a role in placental homeostasis during the perinatal period. Plays an important role in generating the circadian rhythm of the aortic myofilament Ca(2+) sensitivity and vascular contractility by modulating the myosin light chain phosphorylation. The chain is Rho-associated protein kinase 2 (Rock2) from Mus musculus (Mouse).